The primary structure comprises 129 residues: Glycine cleavage system H protein (129 aa).

The Lipoyl-binding domain maps to 23-104 (SVTVGITQHA…CYAAWLFKLK (82 aa)). At K64 the chain carries N6-lipoyllysine.

Belongs to the GcvH family. As to quaternary structure, the glycine cleavage system is composed of four proteins: P, T, L and H. It depends on (R)-lipoate as a cofactor.

The glycine cleavage system catalyzes the degradation of glycine. The H protein shuttles the methylamine group of glycine from the P protein to the T protein. The chain is Glycine cleavage system H protein from Nitrosomonas europaea (strain ATCC 19718 / CIP 103999 / KCTC 2705 / NBRC 14298).